The chain runs to 344 residues: tRNA N6-adenosine threonylcarbamoyltransferase (344 aa).

The Fe cation site is built by His-115 and His-119. Substrate is bound by residues 137–141, Asp-170, Gly-183, Asp-187, and Asn-276; that span reads LVSGG. Asp-306 contributes to the Fe cation binding site.

The protein belongs to the KAE1 / TsaD family. Fe(2+) is required as a cofactor.

It localises to the cytoplasm. It carries out the reaction L-threonylcarbamoyladenylate + adenosine(37) in tRNA = N(6)-L-threonylcarbamoyladenosine(37) in tRNA + AMP + H(+). In terms of biological role, required for the formation of a threonylcarbamoyl group on adenosine at position 37 (t(6)A37) in tRNAs that read codons beginning with adenine. Is involved in the transfer of the threonylcarbamoyl moiety of threonylcarbamoyl-AMP (TC-AMP) to the N6 group of A37, together with TsaE and TsaB. TsaD likely plays a direct catalytic role in this reaction. This chain is tRNA N6-adenosine threonylcarbamoyltransferase, found in Limosilactobacillus fermentum (strain NBRC 3956 / LMG 18251) (Lactobacillus fermentum).